Here is a 313-residue protein sequence, read N- to C-terminus: Protoheme IX farnesyltransferase (313 aa).

8 helical membrane-spanning segments follow: residues I23–I43, P56–L76, L107–L127, L128–L148, N155–T175, A182–M202, L243–L263, and Y291–F311.

It belongs to the UbiA prenyltransferase family. Protoheme IX farnesyltransferase subfamily.

It localises to the cell membrane. The catalysed reaction is heme b + (2E,6E)-farnesyl diphosphate + H2O = Fe(II)-heme o + diphosphate. It participates in porphyrin-containing compound metabolism; heme O biosynthesis; heme O from protoheme: step 1/1. Converts heme B (protoheme IX) to heme O by substitution of the vinyl group on carbon 2 of heme B porphyrin ring with a hydroxyethyl farnesyl side group. The polypeptide is Protoheme IX farnesyltransferase (Mycobacteroides abscessus (strain ATCC 19977 / DSM 44196 / CCUG 20993 / CIP 104536 / JCM 13569 / NCTC 13031 / TMC 1543 / L948) (Mycobacterium abscessus)).